Reading from the N-terminus, the 426-residue chain is Glutamate-1-semialdehyde 2,1-aminomutase (426 aa).

An N6-(pyridoxal phosphate)lysine modification is found at Lys-265.

This sequence belongs to the class-III pyridoxal-phosphate-dependent aminotransferase family. HemL subfamily. It depends on pyridoxal 5'-phosphate as a cofactor.

The protein localises to the cytoplasm. The enzyme catalyses (S)-4-amino-5-oxopentanoate = 5-aminolevulinate. It functions in the pathway porphyrin-containing compound metabolism; protoporphyrin-IX biosynthesis; 5-aminolevulinate from L-glutamyl-tRNA(Glu): step 2/2. The chain is Glutamate-1-semialdehyde 2,1-aminomutase from Hyperthermus butylicus (strain DSM 5456 / JCM 9403 / PLM1-5).